Consider the following 530-residue polypeptide: UDP-N-acetylmuramoyl-L-alanyl-D-glutamate--2,6-diaminopimelate ligase (530 aa).

UDP-N-acetyl-alpha-D-muramoyl-L-alanyl-D-glutamate is bound at residue leucine 52. 139-145 (GTSGKTT) serves as a coordination point for ATP. UDP-N-acetyl-alpha-D-muramoyl-L-alanyl-D-glutamate-binding positions include 181-182 (TT), serine 208, and arginine 216. At lysine 248 the chain carries N6-carboxylysine. Meso-2,6-diaminopimelate is bound by residues arginine 410, 434-437 (DNPR), glycine 488, and glutamate 492. Residues 434 to 437 (DNPR) carry the Meso-diaminopimelate recognition motif motif.

This sequence belongs to the MurCDEF family. MurE subfamily. Mg(2+) is required as a cofactor. Carboxylation is probably crucial for Mg(2+) binding and, consequently, for the gamma-phosphate positioning of ATP.

It is found in the cytoplasm. It catalyses the reaction UDP-N-acetyl-alpha-D-muramoyl-L-alanyl-D-glutamate + meso-2,6-diaminopimelate + ATP = UDP-N-acetyl-alpha-D-muramoyl-L-alanyl-gamma-D-glutamyl-meso-2,6-diaminopimelate + ADP + phosphate + H(+). The protein operates within cell wall biogenesis; peptidoglycan biosynthesis. In terms of biological role, catalyzes the addition of meso-diaminopimelic acid to the nucleotide precursor UDP-N-acetylmuramoyl-L-alanyl-D-glutamate (UMAG) in the biosynthesis of bacterial cell-wall peptidoglycan. The polypeptide is UDP-N-acetylmuramoyl-L-alanyl-D-glutamate--2,6-diaminopimelate ligase (Mycobacterium leprae (strain TN)).